Consider the following 286-residue polypeptide: UDP-3-O-acyl-N-acetylglucosamine deacetylase (286 aa).

Residues H79, H237, and D241 each contribute to the Zn(2+) site. Residue H264 is the Proton donor of the active site.

It belongs to the LpxC family. Zn(2+) is required as a cofactor.

It catalyses the reaction a UDP-3-O-[(3R)-3-hydroxyacyl]-N-acetyl-alpha-D-glucosamine + H2O = a UDP-3-O-[(3R)-3-hydroxyacyl]-alpha-D-glucosamine + acetate. It participates in glycolipid biosynthesis; lipid IV(A) biosynthesis; lipid IV(A) from (3R)-3-hydroxytetradecanoyl-[acyl-carrier-protein] and UDP-N-acetyl-alpha-D-glucosamine: step 2/6. In terms of biological role, catalyzes the hydrolysis of UDP-3-O-myristoyl-N-acetylglucosamine to form UDP-3-O-myristoylglucosamine and acetate, the committed step in lipid A biosynthesis. The polypeptide is UDP-3-O-acyl-N-acetylglucosamine deacetylase (Brucella abortus (strain 2308)).